Consider the following 679-residue polypeptide: Oxidant-induced cell-cycle arrest protein 5 (679 aa).

A Rab-GAP TBC domain is found at 50–441 (GVPPQLRHVV…RVWDLLLGWR (392 aa)). Residues 135 to 153 (NPAGSSSNANTTNIATPTP) show a composition bias toward low complexity. Disordered regions lie at residues 135-159 (NPAG…SSDA), 250-270 (TNNG…NNNT), and 524-544 (QSKA…NDKS). Residues 524–539 (QSKAQKDNTVPSPGSD) are compositionally biased toward polar residues.

The protein belongs to the OCA5 family.

The protein localises to the cytoplasm. In terms of biological role, required for replication of brome mosaic virus (BMV), a positive-strand RNA virus. This chain is Oxidant-induced cell-cycle arrest protein 5 (OCA5), found in Saccharomyces cerevisiae (strain JAY291) (Baker's yeast).